A 428-amino-acid polypeptide reads, in one-letter code: uncharacterized protein (428 aa).

10 consecutive transmembrane segments (helical) span residues 26–46 (VALT…DDVF), 51–71 (AGID…VSVL), 90–110 (AAPL…SALL), 135–155 (TPFL…TLVG), 177–197 (MAPA…WLLG), 223–243 (LLIK…AHPV), 278–298 (TLLF…TGVV), 314–334 (LLTV…IDNI), 359–379 (TFWW…AVAA), and 407–427 (VVTA…YFVF).

It belongs to the CitM (TC 2.A.11) transporter family.

It is found in the cell membrane. This is an uncharacterized protein from Mycobacterium tuberculosis (strain CDC 1551 / Oshkosh).